Here is a 423-residue protein sequence, read N- to C-terminus: Serine incorporator 5 (423 aa).

Residues 1-36 lie on the Extracellular side of the membrane; it reads MSAQCCAGQLACCCGSAGCSLCCDCCPRIRQSLSTR. The helical transmembrane segment at 37 to 57 threads the bilayer; it reads FMYALYFILVVVLCCIMMSTT. The Cytoplasmic portion of the chain corresponds to 58–89; that stretch reads VAHKMKEHIPFFEDMCKGIKAGDTCEKLVGYS. The helical transmembrane segment at 90–110 threads the bilayer; sequence AVYRVCFGMACFFFIFCLLTL. The Extracellular segment spans residues 111–124; that stretch reads KINNSKSCRAHIHN. Asn113 is a glycosylation site (N-linked (GlcNAc...) asparagine). A helical transmembrane segment spans residues 125-145; that stretch reads GFWFFKLLLLGAMCSGAFFIP. The Cytoplasmic portion of the chain corresponds to 146–156; the sequence is DQDTFLNAWRY. Residues 157-177 traverse the membrane as a helical segment; it reads VGAVGGFLFIGIQLLLLVEFA. Over 178–198 the chain is Extracellular; that stretch reads HKWNKNWTAGTASNKLWYASL. N-linked (GlcNAc...) asparagine glycosylation is present at Asn183. A helical membrane pass occupies residues 199-219; that stretch reads ALVTLIMYSIATGGLVLMAVF. Residues 220–230 lie on the Cytoplasmic side of the membrane; it reads YTQKDSCMENK. A helical transmembrane segment spans residues 231–251; it reads ILLGVNGGLCLLISLVAISPW. The Extracellular segment spans residues 252–258; that stretch reads VQNRQPH. The helical transmembrane segment at 259–279 threads the bilayer; the sequence is SGLLQSGVISCYVTYLTFSAL. At 280–311 the chain is on the cytoplasmic side; the sequence is SSKPAEVVLDEHGKNVTICVPDFGQDLYRDEN. Residues 312 to 332 traverse the membrane as a helical segment; it reads LVTILGTSLLIGCILYSCLTS. Topologically, residues 333–385 are extracellular; the sequence is TTRSSSDALQGRYAAPELEIARCCFCFSPGGEDTEEQQPGKEGPRVIYDEKKG. Residues 386–406 traverse the membrane as a helical segment; the sequence is TVYIYSYFHFVFFLASLYVMM. At 407-423 the chain is on the cytoplasmic side; that stretch reads TVTNWFNHVRSAFHLLP.

It belongs to the TDE1 family. In terms of tissue distribution, highly expressed in placenta, skeletal muscle, spleen, thymus, testis and peripheral leukocyte and is expressed weakly in the heart, liver and fetal brain.

Its subcellular location is the cell membrane. It is found in the cytoplasm. It localises to the perinuclear region. It carries out the reaction a 1,2-diacyl-sn-glycero-3-phospho-L-serine(in) = a 1,2-diacyl-sn-glycero-3-phospho-L-serine(out). It catalyses the reaction a 1,2-diacyl-sn-glycero-3-phosphocholine(in) = a 1,2-diacyl-sn-glycero-3-phosphocholine(out). The enzyme catalyses a 1,2-diacyl-sn-glycero-3-phosphoethanolamine(in) = a 1,2-diacyl-sn-glycero-3-phosphoethanolamine(out). Restriction factor required to restrict infectivity of lentiviruses, such as HIV-1: acts by inhibiting an early step of viral infection. Impairs the penetration of the viral particle into the cytoplasm. Non-ATP-dependent, non-specific lipid transporter for phosphatidylserine, phosphatidylcholine, and phosphatidylethanolamine. Functions as a scramblase that flips lipids in both directions across the membrane. Phospholipid scrambling results in HIV-1 surface exposure of phosphatidylserine and loss of membrane asymmetry, which leads to changes in HIV-1 Env conformation and loss of infectivity. Enhances the incorporation of serine into phosphatidylserine and sphingolipids. May play a role in providing serine molecules for the formation of myelin glycosphingolipids in oligodendrocytes. This is Serine incorporator 5 from Homo sapiens (Human).